Here is a 648-residue protein sequence, read N- to C-terminus: Acetyl-coenzyme A synthetase (648 aa).

Residues 190 to 193 (RGGR) and threonine 310 contribute to the CoA site. ATP is bound by residues 386–388 (GEP), 410–415 (DTWWQT), aspartate 499, and arginine 514. Serine 522 serves as a coordination point for CoA. ATP is bound at residue arginine 525. 3 residues coordinate Mg(2+): valine 536, histidine 538, and valine 541. Position 583 (arginine 583) interacts with CoA. Residue lysine 608 is modified to N6-acetyllysine.

Belongs to the ATP-dependent AMP-binding enzyme family. Mg(2+) is required as a cofactor. Post-translationally, acetylated. Deacetylation by the SIR2-homolog deacetylase activates the enzyme.

It carries out the reaction acetate + ATP + CoA = acetyl-CoA + AMP + diphosphate. Functionally, catalyzes the conversion of acetate into acetyl-CoA (AcCoA), an essential intermediate at the junction of anabolic and catabolic pathways. AcsA undergoes a two-step reaction. In the first half reaction, AcsA combines acetate with ATP to form acetyl-adenylate (AcAMP) intermediate. In the second half reaction, it can then transfer the acetyl group from AcAMP to the sulfhydryl group of CoA, forming the product AcCoA. In Methylobacterium radiotolerans (strain ATCC 27329 / DSM 1819 / JCM 2831 / NBRC 15690 / NCIMB 10815 / 0-1), this protein is Acetyl-coenzyme A synthetase.